A 386-amino-acid chain; its full sequence is Trichocyst matrix protein T2-A (386 aa).

The first 19 residues, 1–19 (MKTVILALALIVLASSTQA), serve as a signal peptide directing secretion. Positions 20–48 (DVIATIKKIDQSPFGRTLFDTIYLELQTG) are excised as a propeptide. The stretch at 51-154 (LDRLLSTLTD…AEEHEDFEEK (104 aa)) forms a coiled coil. The propeptide occupies 184–238 (KGKATKQTHKFTKEVASMIQKHFTTSAKKTAKFQHRKGYSKLFKAFATIASKVEQ). Residues 293-332 (SALANATSDLASLNDIIAQVEASLDTTEQRIENVSADRHD) adopt a coiled-coil conformation.

Belongs to the TMP family.

The protein resides in the trichocyst. In terms of biological role, structural protein that crystallize inside the trichocyst matrix. The chain is Trichocyst matrix protein T2-A (T2A) from Paramecium tetraurelia.